We begin with the raw amino-acid sequence, 410 residues long: MTANSPIHVYSEIGKLKKVMLHRPGKEIENLMPDYLERLLFDDIPFLENAQKEHDAFAEALRNEGIEVLYLEKLAAESLINEEVRTAFIDEYIAEANIRGRATKEAIRNMLMSIEDNQELIDKTMAGIQKSELPEISDEEKGLTDLVESDYPFAIDPMPNLYFTRDPFATIGAGVSLNHMFSETRNRETLYGKYIFTHHPEYGGKVPMVYDRSENTRIEGGDELVLSKDVLAVGISQRTDAASIEKLLVNIFKQNLGFKKVLAFEFANNRKFMHLDTVFTMVDYDKFTIHPEIEGDLRVYSVTYENDKLKIVEEKGDLAELLAANLGVEKVELIRCGGDNIVAAGREQWNDGSNTLTIAPGVVVVYNRNTITNAILESKGLRLVKIEGSELVRGRGGPRCMSMPFEREDI.

Cysteine 400 functions as the Amidino-cysteine intermediate in the catalytic mechanism.

This sequence belongs to the arginine deiminase family.

The protein resides in the cytoplasm. It carries out the reaction L-arginine + H2O = L-citrulline + NH4(+). Its pathway is amino-acid degradation; L-arginine degradation via ADI pathway; carbamoyl phosphate from L-arginine: step 1/2. In Streptococcus uberis (strain ATCC BAA-854 / 0140J), this protein is Arginine deiminase.